The following is a 130-amino-acid chain: MNFVFLWAALGGAIGSSLRYFVGKMMPSKFLMFESFPLGTFSVNIIGCFVIGFMGHLATKKVFGDDFGIFFVTGVLGGFTTFSSYGLDTLKLLQKSQYIEAISYVLGTNLLGLIGVAIGWFLAKNFVGVH.

Helical transmembrane passes span F3 to G23, L38 to A58, F67 to L87, and I102 to L122. Na(+) is bound by residues G77 and T80.

Belongs to the fluoride channel Fluc/FEX (TC 1.A.43) family.

Its subcellular location is the cell inner membrane. It carries out the reaction fluoride(in) = fluoride(out). With respect to regulation, na(+) is not transported, but it plays an essential structural role and its presence is essential for fluoride channel function. Its function is as follows. Fluoride-specific ion channel. Important for reducing fluoride concentration in the cell, thus reducing its toxicity. The protein is Fluoride-specific ion channel FluC of Helicobacter pylori (strain G27).